Here is a 236-residue protein sequence, read N- to C-terminus: Leucyl/phenylalanyl-tRNA--protein transferase (236 aa).

The span at 1-13 shows a compositional bias: polar residues; that stretch reads MNSLSYLNQDQQS. Residues 1–22 form a disordered region; it reads MNSLSYLNQDQQSFPPPEQALS.

It belongs to the L/F-transferase family.

It is found in the cytoplasm. The catalysed reaction is N-terminal L-lysyl-[protein] + L-leucyl-tRNA(Leu) = N-terminal L-leucyl-L-lysyl-[protein] + tRNA(Leu) + H(+). The enzyme catalyses N-terminal L-arginyl-[protein] + L-leucyl-tRNA(Leu) = N-terminal L-leucyl-L-arginyl-[protein] + tRNA(Leu) + H(+). It catalyses the reaction L-phenylalanyl-tRNA(Phe) + an N-terminal L-alpha-aminoacyl-[protein] = an N-terminal L-phenylalanyl-L-alpha-aminoacyl-[protein] + tRNA(Phe). Functionally, functions in the N-end rule pathway of protein degradation where it conjugates Leu, Phe and, less efficiently, Met from aminoacyl-tRNAs to the N-termini of proteins containing an N-terminal arginine or lysine. The chain is Leucyl/phenylalanyl-tRNA--protein transferase from Shewanella piezotolerans (strain WP3 / JCM 13877).